The sequence spans 317 residues: Probable arabinan endo-1,5-alpha-L-arabinosidase C (317 aa).

The signal sequence occupies residues 1-17 (MLSFLAALSLPLALVNA). Aspartate 32 acts as the Proton acceptor in catalysis. The N-linked (GlcNAc...) asparagine glycan is linked to asparagine 190. The active-site Proton donor is glutamate 198.

It belongs to the glycosyl hydrolase 43 family.

The protein localises to the secreted. It catalyses the reaction Endohydrolysis of (1-&gt;5)-alpha-arabinofuranosidic linkages in (1-&gt;5)-arabinans.. The protein operates within glycan metabolism; L-arabinan degradation. Its function is as follows. Endo-1,5-alpha-L-arabinanase involved in degradation of pectin. Its preferred substrate is linear 1,5-alpha-L-arabinan. This is Probable arabinan endo-1,5-alpha-L-arabinosidase C (abnC) from Aspergillus flavus (strain ATCC 200026 / FGSC A1120 / IAM 13836 / NRRL 3357 / JCM 12722 / SRRC 167).